Reading from the N-terminus, the 66-residue chain is U10-theraphotoxin-Cg1a 3 (66 aa).

A signal peptide spans 1-21; that stretch reads MKTSVLFVIFGLALLFCLSFA. Residues 22-29 constitute a propeptide that is removed on maturation; that stretch reads DELEDTGR. Disulfide bonds link Cys-31/Cys-46, Cys-38/Cys-51, and Cys-45/Cys-58.

This sequence belongs to the neurotoxin 10 (Hwtx-1) family. 29 (Jztx-13) subfamily. In terms of tissue distribution, expressed by the venom gland.

It is found in the secreted. In terms of biological role, probable ion channel inhibitor. The polypeptide is U10-theraphotoxin-Cg1a 3 (Chilobrachys guangxiensis (Chinese earth tiger tarantula)).